A 475-amino-acid polypeptide reads, in one-letter code: 23S rRNA (uracil(1939)-C(5))-methyltransferase RlmD (475 aa).

Residues 1 to 10 are compositionally biased toward basic residues; it reads MAMLGKRRPP. The interval 1 to 33 is disordered; the sequence is MAMLGKRRPPRTANERVRRERGSATRRDDATAD. Over residues 13 to 30 the composition is skewed to basic and acidic residues; that stretch reads ANERVRRERGSATRRDDA. The region spanning 26–85 is the TRAM domain; sequence RRDDATADGLSIERLAHDGRGVARDPHGKTVFVDQALPGERVRVAVHRQRKRFDEAHVVE. Residues Cys98, Cys104, Cys107, and Cys183 each coordinate [4Fe-4S] cluster. 6 residues coordinate S-adenosyl-L-methionine: Gln294, Phe323, Asn328, Glu344, Asp371, and Asp388. The Nucleophile role is filled by Cys414. The segment at 455–475 is disordered; the sequence is TRDTPRGRSTSVEREDHGQGP. Residues 457 to 475 are compositionally biased toward basic and acidic residues; the sequence is DTPRGRSTSVEREDHGQGP.

Belongs to the class I-like SAM-binding methyltransferase superfamily. RNA M5U methyltransferase family. RlmD subfamily.

The catalysed reaction is uridine(1939) in 23S rRNA + S-adenosyl-L-methionine = 5-methyluridine(1939) in 23S rRNA + S-adenosyl-L-homocysteine + H(+). Catalyzes the formation of 5-methyl-uridine at position 1939 (m5U1939) in 23S rRNA. The polypeptide is 23S rRNA (uracil(1939)-C(5))-methyltransferase RlmD (Chromohalobacter salexigens (strain ATCC BAA-138 / DSM 3043 / CIP 106854 / NCIMB 13768 / 1H11)).